The following is a 659-amino-acid chain: MSLPPEKASELKQLIHQQLSKMDVHGRIREILAETIREELAPDQQHLSTEDLIKALRRRGIIDDVMKELNFVTDSVDQELPSSPKQTVGFDKQSTLKKTNVDPTRRYLYLQVLGGKAFLEHLQEPEPLPGQICSTFTLCLHYRNQRFRSKPVPCACEPDFHDGFLLEVHRESLGDGTRMADSTTMLSISDPIHMVLIKTDIFGETTLVASYFLEWRSVLGSENGVTNLTVELMGVGTESKVSVGILNIKLEMYPPLSQTLSQEVVNTQLALERQKTAEKERLFLVYAKQWWREYLQIRPSHNSRLVKIFAQDENGINRPVCSYVKPLRAGRLLDTPRQAARFVNVLGYERAPVIGGGGKQEQWCTLLAFLCRNKGDCEDHANLLCSLLLGYGLEAFVCVGTKAKGAPHAWVMTCGTDGTIMFWESLTGHRYIHKPTNPDGPPLAEQPKPLYPYRTIGCVFNHQMFLGNCQPSDAVETCIFDLNDESKWKPMSEEAIKSVCAPGATTSLPPFPPLCASTIDASVTSNEIEMQLRLLVSEHRKDLGLTTVWEDQLSYLLSPALASYEFERTTSISAGNEEFQDAIRRAVPDGHTFKGFPIHFVYRNARRAFATCLRSPFCEEIICCRGDQVRLAVRVRVFTYPESACAVWIMFACKYRSVL.

Phosphoserine is present on residues Ser-75 and Ser-83.

It belongs to the CEP76 family. In terms of assembly, interacts with CCP110 and CEP97.

The protein localises to the cytoplasm. Its subcellular location is the cytoskeleton. It localises to the microtubule organizing center. It is found in the centrosome. The protein resides in the centriole. Functionally, centrosomal protein involved in regulation of centriole duplication. Required to limit centriole duplication to once per cell cycle by preventing centriole reduplication. The chain is Centrosomal protein of 76 kDa (Cep76) from Mus musculus (Mouse).